A 429-amino-acid chain; its full sequence is Glutamate-1-semialdehyde 2,1-aminomutase 1 (429 aa).

The residue at position 268 (Lys268) is an N6-(pyridoxal phosphate)lysine.

Belongs to the class-III pyridoxal-phosphate-dependent aminotransferase family. HemL subfamily. In terms of assembly, homodimer. Requires pyridoxal 5'-phosphate as cofactor.

Its subcellular location is the cytoplasm. It catalyses the reaction (S)-4-amino-5-oxopentanoate = 5-aminolevulinate. The protein operates within porphyrin-containing compound metabolism; protoporphyrin-IX biosynthesis; 5-aminolevulinate from L-glutamyl-tRNA(Glu): step 2/2. The chain is Glutamate-1-semialdehyde 2,1-aminomutase 1 from Listeria welshimeri serovar 6b (strain ATCC 35897 / DSM 20650 / CCUG 15529 / CIP 8149 / NCTC 11857 / SLCC 5334 / V8).